The primary structure comprises 84 residues: MKTPILFVVVVAVLIVTDSAEGFKGKANSFLKPLQRRGLEEECCQETCSYHEIWENCKKLCSDELHKMFVEICQPPTEKVPERD.

The first 22 residues, 1-22 (MKTPILFVVVVAVLIVTDSAEG), serve as a signal peptide directing secretion. The propeptide occupies 23-37 (FKGKANSFLKPLQRR). Cystine bridges form between Cys43–Cys48, Cys44–Cys73, and Cys57–Cys61.

It belongs to the insulin family.

It localises to the secreted. In terms of biological role, insulin decreases blood glucose concentration. May have evolved to activate insulin receptors (INSR) in vertebrates. Molecular docking studies reveals unique interaction with the human insulin receptor. In vivo, insulin-like peptide injection reduces blood glucose levels in two models of zebrafish diabetes (streptozotocin- and glucose-induced). Also shorter swimming distance of zebrafish larvae, an effect which is not observed with human insulin. The chain is Insulin-like peptide 05 from Exaiptasia diaphana (Tropical sea anemone).